Here is a 400-residue protein sequence, read N- to C-terminus: Double C2-like domain-containing protein alpha (400 aa).

The segment at 1–89 (MRGRRGDRMT…DSYDSDDATA (89 aa)) is interaction with UNC13D and DYNLT1. C2 domains follow at residues 89–211 (ALGT…HFNI) and 251–384 (ERGR…ERWH). Ca(2+)-binding residues include aspartate 120, aspartate 126, aspartate 181, aspartate 183, aspartate 282, aspartate 288, aspartate 342, aspartate 344, and aspartate 350. The interaction with UNC13D stretch occupies residues 215–400 (RQVPLASPSS…PPAAGALSSA (186 aa)).

Interacts (via N-terminus) with UNC13A. Interacts with cytoplasmic dynein light chain DYNLT1. Interacts with UNC13D. Ca(2+) serves as cofactor. Predominantly expressed in brain. Also expressed in testis.

It localises to the lysosome. The protein resides in the cytoplasmic vesicle. The protein localises to the secretory vesicle. Its subcellular location is the synaptic vesicle membrane. It is found in the synapse. It localises to the synaptosome. In terms of biological role, calcium sensor which most probably regulates fusion of vesicles with membranes. Binds calcium and phospholipids. May be involved in calcium dependent neurotransmitter release through the interaction with UNC13A. May be involved in calcium-dependent spontaneous release of neurotransmitter in absence of action potentials in neuronal cells. Regulates Ca(2+)-dependent secretory lysosome exocytosis in mast cells. The chain is Double C2-like domain-containing protein alpha (DOC2A) from Homo sapiens (Human).